The following is a 131-amino-acid chain: Arsenate reductase 2 (131 aa).

Residues C10, C82, and C89 each act as nucleophile in the active site. Disulfide bonds link C10-C82 and C82-C89.

The protein belongs to the low molecular weight phosphotyrosine protein phosphatase family. Thioredoxin-coupled ArsC subfamily.

The protein localises to the cytoplasm. It carries out the reaction arsenate + [thioredoxin]-dithiol + H(+) = arsenite + [thioredoxin]-disulfide + H2O. In terms of biological role, catalyzes the reduction of arsenate [As(V)] to arsenite [As(III)]. In Staphylococcus epidermidis (strain ATCC 35984 / DSM 28319 / BCRC 17069 / CCUG 31568 / BM 3577 / RP62A), this protein is Arsenate reductase 2.